The chain runs to 313 residues: uncharacterized protein (313 aa).

It to M.jannaschii MJ0977 C-terminal region.

This is an uncharacterized protein from Methanocaldococcus jannaschii (strain ATCC 43067 / DSM 2661 / JAL-1 / JCM 10045 / NBRC 100440) (Methanococcus jannaschii).